The chain runs to 311 residues: ATP synthase gamma chain (311 aa).

It belongs to the ATPase gamma chain family. In terms of assembly, F-type ATPases have 2 components, CF(1) - the catalytic core - and CF(0) - the membrane proton channel. CF(1) has five subunits: alpha(3), beta(3), gamma(1), delta(1), epsilon(1). CF(0) has three main subunits: a, b and c.

It is found in the cell membrane. Functionally, produces ATP from ADP in the presence of a proton gradient across the membrane. The gamma chain is believed to be important in regulating ATPase activity and the flow of protons through the CF(0) complex. The chain is ATP synthase gamma chain from Limosilactobacillus fermentum (strain NBRC 3956 / LMG 18251) (Lactobacillus fermentum).